The sequence spans 736 residues: Serine/threonine-protein kinase BRSK2 (736 aa).

The Protein kinase domain occupies 19–270 (YRLEKTLGKG…LEHIQKHIWY (252 aa)). Residues 25–33 (LGKGQTGLV) and Lys48 contribute to the ATP site. The Proton acceptor role is filled by Asp141. The residue at position 174 (Thr174) is a Phosphothreonine; by LKB1. Residue Thr260 is modified to Phosphothreonine; by PKA. At Ser294 the chain carries Phosphoserine. Residues 297–339 (DIDPDVLDSMHSLGCFRDRNKLLQDLLSEEENQEKMIYFLLLD) enclose the UBA domain. Positions 345-366 (PSQEDEDLPPRNEIDPPRKRVD) are enriched in basic and acidic residues. Disordered stretches follow at residues 345–475 (PSQE…GVPW) and 493–513 (HRRKLQVPTPEEMSNLTPESS). Phosphoserine occurs at positions 367, 382, 393, 412, 416, 423, and 427. The segment covering 410–428 (SRSISGASSGLSTSPLSSP) has biased composition (low complexity). Over residues 431–445 (TPHPSPRGSPLPTPK) the composition is skewed to pro residues. Ser455 is subject to Phosphoserine. 3 positions are modified to phosphothreonine: Thr459, Thr463, and Thr509. Residues Ser512, Ser513, and Ser520 each carry the phosphoserine modification. The short motif at 603–605 (KEN) is the KEN box element. The disordered stretch occupies residues 681–736 (KNGQAAQAPSTPAKRSAHGPLGDSAAAGPGPGGDAEYPTGKDTAKMGPPTARREQP). Residues 699-708 (GPLGDSAAAG) show a composition bias toward low complexity.

Belongs to the protein kinase superfamily. CAMK Ser/Thr protein kinase family. SNF1 subfamily. In terms of assembly, interacts with FZR1, a regulatory subunit of the APC ubiquitin ligase complex. Interacts with COPS5. Interacts with PAK1. Requires Mg(2+) as cofactor. In terms of processing, phosphorylated at Thr-174 by STK11/LKB1 in complex with STE20-related adapter-alpha (STRADA) pseudo kinase and CAB39. Not phosphorylated at Thr-174 by CaMKK2. In contrast, it is phosphorylated and activated by CaMKK1. May be inactivated via dephosphorylation of Thr-174 by PP2C. Phosphorylated at Thr-260 by PKA. Phosphorylation at Thr-260 by PKA was not observed in another study, but this may reflect differences in the experimental approach. Phosphorylation at Thr-260 seems to play a role in the regulation of insulin secretion. Polyubiquitinated by the APC complex in conjunction with FZR1, leading to its proteasomal degradation. Targeted for proteasomal degradation by interaction with COPS5. BRSK2 levels change during the cell cycle. BRSK2 levels are low at the G1/S boundary and gradually increase as cells progress into G2 phase. BRSK2 levels decrease rapidly at the end of mitosis. Detected in pancreas islets (at protein level).

Its subcellular location is the cytoplasm. It is found in the cytoskeleton. The protein resides in the microtubule organizing center. The protein localises to the centrosome. It localises to the perinuclear region. Its subcellular location is the endoplasmic reticulum. It catalyses the reaction L-seryl-[protein] + ATP = O-phospho-L-seryl-[protein] + ADP + H(+). The enzyme catalyses L-threonyl-[protein] + ATP = O-phospho-L-threonyl-[protein] + ADP + H(+). It carries out the reaction L-seryl-[tau protein] + ATP = O-phospho-L-seryl-[tau protein] + ADP + H(+). The catalysed reaction is L-threonyl-[tau protein] + ATP = O-phospho-L-threonyl-[tau protein] + ADP + H(+). Activated by phosphorylation on Thr-174 by STK11/LKB1. Functionally, serine/threonine-protein kinase that plays a key role in polarization of neurons and axonogenesis, cell cycle progress and insulin secretion. Phosphorylates CDK16, CDC25C, MAPT/TAU, PAK1 and WEE1. Following phosphorylation and activation by STK11/LKB1, acts as a key regulator of polarization of cortical neurons, probably by mediating phosphorylation of microtubule-associated proteins such as MAPT/TAU at 'Thr-529' and 'Ser-579'. Also regulates neuron polarization by mediating phosphorylation of WEE1 at 'Ser-642' in postmitotic neurons, leading to down-regulate WEE1 activity in polarized neurons. Plays a role in the regulation of the mitotic cell cycle progress and the onset of mitosis. Plays a role in the regulation of insulin secretion in response to elevated glucose levels, probably via phosphorylation of CDK16 and PAK1. While BRSK2 phosphorylated at Thr-174 can inhibit insulin secretion, BRSK2 phosphorylated at Thr-260 can promote insulin secretion. Regulates reorganization of the actin cytoskeleton. May play a role in the apoptotic response triggered by endoplasmic reticulum (ER) stress. This chain is Serine/threonine-protein kinase BRSK2 (BRSK2), found in Homo sapiens (Human).